A 482-amino-acid polypeptide reads, in one-letter code: Iroquois-class homeodomain protein irx-5 (482 aa).

The segment at residues 109-171 (DPAYRKNATR…NARRRLKKEN (63 aa)) is a DNA-binding region (homeobox). Disordered regions lie at residues 173-307 (MTWT…HQSH) and 462-482 (QSQA…MSSI). Residues 182-198 (EDEEDDENIDLEKNEED) show a composition bias toward acidic residues. Basic and acidic residues predominate over residues 199 to 256 (DPRKLEEKGDQDGDAGDQKRSPSAVDFDRLEGEVRQGKELDQTRSDSEQNEVEERNDL). Positions 264–273 (PTSPLCPPDQ) are enriched in pro residues. Residues 284 to 305 (HRHTVHNHHHQSIQQLHHHSHQ) are compositionally biased toward basic residues. Residues 467–482 (LNKDTPYEMKKGMSSI) are compositionally biased toward basic and acidic residues.

It belongs to the TALE/IRO homeobox family. In terms of tissue distribution, expressed in the neural plate in overlapping patterns with other irx members, which all share an anterior border of expression. Broadly expressed in the tailbud rhombencephalon (hindbrain). Outside the nervous system and at tailbud stages, expressed in the developing otic vesicle and branchial arches.

The protein localises to the nucleus. In terms of biological role, acts partially redundantly with other irx members in neural patterning. Required for formation of the posterior forebrain, midbrain, hindbrain, and to a lesser extent, spinal cord. Patterns the neuroectoderm in both the anterior/posterior and dorsal/ventral axes. Does not appear to play a role in pronephros kidney development. Involved in craniofacial and gonadal development. Modulates the migration of progenitor cell populations in branchial arches and gonads by repressing CXCL12. In Xenopus tropicalis (Western clawed frog), this protein is Iroquois-class homeodomain protein irx-5.